The following is a 430-amino-acid chain: MDEQPRLMHSHAGVGMAGHPGLSQHLQDGAGGTEGEGGRKQDIGDILQQIMTITDQSLDEAQARKHALNCHRMKPALFNVLCEIKEKTVLSIRGAQEEEPTDPQLMRLDNMLLAEGVAGPEKGGGSAAAAAAAAASGGAGSDNSVEHSDYRAKLSQIRQIYHTELEKYEQACNEFTTHVMNLLREQSRTRPISPKEIERMVSIIHRKFSSIQMQLKQSTCEAVMILRSRFLDARRKRRNFNKQATEILNEYFYSHLSNPYPSEEAKEELAKKCGITVSQVSNWFGNKRIRYKKNIGKFQEEANIYAAKTAVTATNVSAHGSQANSPSTPNSAGSSSSFNMSNSGDLFMSVQSLNGDSYQGAQVGANVQSQVDTLRHVISQTGGYSDGLAASQMYSPQGISANGGWQDATTPSSVTSPTEGPGSVHSDTSN.

Positions 1 to 40 (MDEQPRLMHSHAGVGMAGHPGLSQHLQDGAGGTEGEGGRK) are disordered. Residues 38–232 (GRKQDIGDIL…VMILRSRFLD (195 aa)) form the PBC domain. The PBC-A stretch occupies residues 45-124 (DILQQIMTIT…EGVAGPEKGG (80 aa)). The PBC-B stretch occupies residues 127–232 (AAAAAAAAAS…VMILRSRFLD (106 aa)). A DNA-binding region (homeobox; TALE-type) is located at residues 233–295 (ARRKRRNFNK…NKRIRYKKNI (63 aa)). Disordered regions lie at residues 317–338 (SAHG…SSSF) and 395–430 (SPQG…DTSN). Residues 323 to 338 (ANSPSTPNSAGSSSSF) show a composition bias toward low complexity. Residues 407–418 (DATTPSSVTSPT) are compositionally biased toward polar residues.

The protein belongs to the TALE/PBX homeobox family. In terms of assembly, forms a heterodimer with MEIS1 which binds DNA. The PBX1-MEIS1 heterodimer binds a cAMP-responsive sequence in CYP17. It also binds a consensus region in the SOX3 promoter. PBX1 forms heterotrimers with MEIS1 and a number of HOX proteins including HOXA9, HOXD4, HOXD9 and HOXD10. Forms heterodimers with HOXA1, HOXA5, HOXB7 and HOXB8 which bind the 5'-TGATTGAT-3' consensus sequence. Also forms heterodimers with HOXA5, HOXB7, HOXB8, HOXC8 and HOXD4 which bind the 5'-ATCAATCAA-3' consensus sequence. Interacts with PBXIP1. Interacts with TLX1. Interacts with FOXC1. Interacts with MN1. Interacts with MEIS2 isoform 4, SP1, SP3 and KLF4. As to quaternary structure, part of a PDX1:PBX1b:MEIS2B complex; PBX1b recruits MEIS2B to the complex. Expressed in the kidney. Expressed in the endothelial cells of the glomeruli and interstitium (at protein level). Expressed in all tissues except in cells of the B and T lineage. Expressed strongly in kidney and brain.

The protein localises to the nucleus. Transcription factor which binds the DNA sequence 5'-TGATTGAT-3' as part of a heterodimer with HOX proteins such as HOXA1, HOXA5, HOXB7 and HOXB8. Binds to the DNA sequence 5'-TGATTGAC-3' in complex with a nuclear factor which is not a class I HOX protein. Has also been shown to bind the DNA sequence 5'-ATCAATCAA-3' cooperatively with HOXA5, HOXB7, HOXB8, HOXC8 and HOXD4. Acts as a transcriptional activator of PF4 in complex with MEIS1. Also activates transcription of SOX3 in complex with MEIS1 by binding to the 5'-TGATTGAC-3' consensus sequence. In natural killer cells, binds to the NFIL3 promoter and acts as a transcriptional activator of NFIL3, promoting natural killer cell development. Plays a role in the cAMP-dependent regulation of CYP17A1 gene expression via its cAMP-regulatory sequence (CRS1). Probably in complex with MEIS2, involved in transcriptional regulation by KLF4. Acts as a transcriptional activator of NKX2-5 and a transcriptional repressor of CDKN2B. Together with NKX2-5, required for spleen development through a mechanism that involves CDKN2B repression. Functionally, as part of a PDX1:PBX1b:MEIS2B complex in pancreatic acinar cells, is involved in the transcriptional activation of the ELA1 enhancer; the complex binds to the enhancer B element and cooperates with the transcription factor 1 complex (PTF1) bound to the enhancer A element. In Homo sapiens (Human), this protein is Pre-B-cell leukemia transcription factor 1 (PBX1).